A 235-amino-acid chain; its full sequence is Elongation factor Tu, chloroplastic (235 aa).

One can recognise a tr-type G domain in the interval 1 to 125 (KNMITGAAQM…SVDSYIPTPI (125 aa)). 47–50 (NKED) serves as a coordination point for GTP.

The protein belongs to the TRAFAC class translation factor GTPase superfamily. Classic translation factor GTPase family. EF-Tu/EF-1A subfamily.

Its subcellular location is the plastid. It localises to the chloroplast. It carries out the reaction GTP + H2O = GDP + phosphate + H(+). In terms of biological role, GTP hydrolase that promotes the GTP-dependent binding of aminoacyl-tRNA to the A-site of ribosomes during protein biosynthesis. In Costaria costata (Five-ribbed kelp), this protein is Elongation factor Tu, chloroplastic (tufA).